Here is an 86-residue protein sequence, read N- to C-terminus: Co-chaperonin GroES (86 aa).

It belongs to the GroES chaperonin family. As to quaternary structure, heptamer of 7 subunits arranged in a ring. Interacts with the chaperonin GroEL.

The protein resides in the cytoplasm. Together with the chaperonin GroEL, plays an essential role in assisting protein folding. The GroEL-GroES system forms a nano-cage that allows encapsulation of the non-native substrate proteins and provides a physical environment optimized to promote and accelerate protein folding. GroES binds to the apical surface of the GroEL ring, thereby capping the opening of the GroEL channel. This chain is Co-chaperonin GroES, found in Sulfurovum sp. (strain NBC37-1).